Reading from the N-terminus, the 361-residue chain is Phosphoserine aminotransferase (361 aa).

Arg42 provides a ligand contact to L-glutamate. Pyridoxal 5'-phosphate is bound by residues 76-77 (AR), Trp102, Thr153, Asp173, and Gln196. At Lys197 the chain carries N6-(pyridoxal phosphate)lysine. 238–239 (NT) lines the pyridoxal 5'-phosphate pocket.

It belongs to the class-V pyridoxal-phosphate-dependent aminotransferase family. SerC subfamily. In terms of assembly, homodimer. Pyridoxal 5'-phosphate serves as cofactor.

Its subcellular location is the cytoplasm. It carries out the reaction O-phospho-L-serine + 2-oxoglutarate = 3-phosphooxypyruvate + L-glutamate. The enzyme catalyses 4-(phosphooxy)-L-threonine + 2-oxoglutarate = (R)-3-hydroxy-2-oxo-4-phosphooxybutanoate + L-glutamate. The protein operates within amino-acid biosynthesis; L-serine biosynthesis; L-serine from 3-phospho-D-glycerate: step 2/3. It participates in cofactor biosynthesis; pyridoxine 5'-phosphate biosynthesis; pyridoxine 5'-phosphate from D-erythrose 4-phosphate: step 3/5. Its function is as follows. Catalyzes the reversible conversion of 3-phosphohydroxypyruvate to phosphoserine and of 3-hydroxy-2-oxo-4-phosphonooxybutanoate to phosphohydroxythreonine. The protein is Phosphoserine aminotransferase of Buchnera aphidicola subsp. Acyrthosiphon pisum (strain Tuc7).